The sequence spans 103 residues: Small ribosomal subunit protein uS10 (103 aa).

Belongs to the universal ribosomal protein uS10 family. Part of the 30S ribosomal subunit.

Its function is as follows. Involved in the binding of tRNA to the ribosomes. The protein is Small ribosomal subunit protein uS10 of Alcanivorax borkumensis (strain ATCC 700651 / DSM 11573 / NCIMB 13689 / SK2).